The primary structure comprises 248 residues: 3-deoxy-manno-octulosonate cytidylyltransferase (248 aa).

This sequence belongs to the KdsB family.

Its subcellular location is the cytoplasm. It carries out the reaction 3-deoxy-alpha-D-manno-oct-2-ulosonate + CTP = CMP-3-deoxy-beta-D-manno-octulosonate + diphosphate. It participates in nucleotide-sugar biosynthesis; CMP-3-deoxy-D-manno-octulosonate biosynthesis; CMP-3-deoxy-D-manno-octulosonate from 3-deoxy-D-manno-octulosonate and CTP: step 1/1. Its pathway is bacterial outer membrane biogenesis; lipopolysaccharide biosynthesis. Functionally, activates KDO (a required 8-carbon sugar) for incorporation into bacterial lipopolysaccharide in Gram-negative bacteria. The protein is 3-deoxy-manno-octulosonate cytidylyltransferase of Photobacterium profundum (strain SS9).